A 592-amino-acid polypeptide reads, in one-letter code: Putative nucleoside-triphosphatase (592 aa).

Glutamate 200 functions as the Proton acceptor in the catalytic mechanism.

Belongs to the GDA1/CD39 NTPase family.

The enzyme catalyses a ribonucleoside 5'-triphosphate + H2O = a ribonucleoside 5'-diphosphate + phosphate + H(+). This Toxoplasma gondii protein is Putative nucleoside-triphosphatase (NTP4).